A 430-amino-acid polypeptide reads, in one-letter code: Enolase (430 aa).

Residues 1–140 (MPYIVDVYAR…YQYLGGFNSK (140 aa)) form a sufficient for secretion region. Phosphothreonine is present on Thr-141. Position 163 (Gln-163) interacts with (2R)-2-phosphoglycerate. Glu-205 acts as the Proton donor in catalysis. Asp-242 lines the Mg(2+) pocket. Position 259 is a phosphoserine (Ser-259). Tyr-281 bears the Phosphotyrosine mark. Glu-287 and Asp-314 together coordinate Mg(2+). At Ser-325 the chain carries Phosphoserine. Residues Lys-339, Arg-368, Ser-369, and Lys-390 each coordinate (2R)-2-phosphoglycerate. The active-site Proton acceptor is Lys-339.

The protein belongs to the enolase family. In terms of assembly, homooctamer. Component of the RNA degradosome complex composed of rny, rnjA, rnjB, pnp, pfkA and eno (although rnjA and rnjB's presence is controversial). Requires Mg(2+) as cofactor. Phosphorylated during sporulation.

Its subcellular location is the cytoplasm. The protein localises to the secreted. It localises to the cell surface. The enzyme catalyses (2R)-2-phosphoglycerate = phosphoenolpyruvate + H2O. It participates in carbohydrate degradation; glycolysis; pyruvate from D-glyceraldehyde 3-phosphate: step 4/5. With respect to regulation, covalent binding to the substrate (probably 2-PG) at Lys-339 of a small fraction of enolase causes inactivation of the enzyme, and possibly serves as a signal for the export of the protein. Citrate acts as a non-competitive inhibitor for both forward and reverse reactions, probably by chelating Mg(2+). Its function is as follows. Catalyzes the reversible conversion of 2-phosphoglycerate (2-PG) into phosphoenolpyruvate (PEP). It is essential for the degradation of carbohydrates via glycolysis. Functionally, a component of the RNA degradosome, a multi-enzyme complex involved in RNA processing and messenger RNA degradation. The protein is Enolase of Bacillus subtilis (strain 168).